Here is a 159-residue protein sequence, read N- to C-terminus: Phosphopantetheine adenylyltransferase (159 aa).

Thr10 contributes to the substrate binding site. ATP is bound by residues 10–11 and His18; that span reads TF. 3 residues coordinate substrate: Lys42, Met74, and Arg88. Residues 89-91, Glu99, and 124-130 contribute to the ATP site; these read GLR and WSFISSS.

Belongs to the bacterial CoaD family. As to quaternary structure, homohexamer. The cofactor is Mg(2+).

The protein resides in the cytoplasm. The enzyme catalyses (R)-4'-phosphopantetheine + ATP + H(+) = 3'-dephospho-CoA + diphosphate. Its pathway is cofactor biosynthesis; coenzyme A biosynthesis; CoA from (R)-pantothenate: step 4/5. Functionally, reversibly transfers an adenylyl group from ATP to 4'-phosphopantetheine, yielding dephospho-CoA (dPCoA) and pyrophosphate. In Shigella dysenteriae serotype 1 (strain Sd197), this protein is Phosphopantetheine adenylyltransferase.